Reading from the N-terminus, the 98-residue chain is NADH-ubiquinone oxidoreductase chain 4L (98 aa).

The next 3 membrane-spanning stretches (helical) occupy residues 1–21, 29–49, and 61–81; these read MSLT…GLLM, SLLC…MTIL, and IILL…LVMV.

The protein belongs to the complex I subunit 4L family. In terms of assembly, core subunit of respiratory chain NADH dehydrogenase (Complex I) which is composed of 45 different subunits.

The protein localises to the mitochondrion inner membrane. The catalysed reaction is a ubiquinone + NADH + 5 H(+)(in) = a ubiquinol + NAD(+) + 4 H(+)(out). Its function is as follows. Core subunit of the mitochondrial membrane respiratory chain NADH dehydrogenase (Complex I) which catalyzes electron transfer from NADH through the respiratory chain, using ubiquinone as an electron acceptor. Part of the enzyme membrane arm which is embedded in the lipid bilayer and involved in proton translocation. The protein is NADH-ubiquinone oxidoreductase chain 4L (MT-ND4L) of Chiroderma trinitatum (Little big-eyed bat).